We begin with the raw amino-acid sequence, 330 residues long: mRNA-capping enzyme (330 aa).

K82 functions as the N6-GMP-lysine intermediate in the catalytic mechanism.

It belongs to the eukaryotic GTase family. Monomer. Mg(2+) is required as a cofactor. Requires Mn(2+) as cofactor.

It carries out the reaction a 5'-end diphospho-ribonucleoside in mRNA + GTP + H(+) = a 5'-end (5'-triphosphoguanosine)-ribonucleoside in mRNA + diphosphate. In terms of biological role, mRNA capping. Transfers a GMP cap onto the end of mRNA that terminates with a 5'-diphosphate tail. In Chlorella (PBCV-1), this protein is mRNA-capping enzyme.